The chain runs to 782 residues: Beta-mannosyltransferase 9 (782 aa).

Residues 1-26 lie on the Cytoplasmic side of the membrane; sequence MEKLIQSTISLFISLSLKISTKSYKS. Residues 27–47 traverse the membrane as a helical segment; the sequence is IISILFIISLLSIILTTTITV. At 48–782 the chain is on the extracellular side; the sequence is YHDPERIITT…GKDKGKDKSN (735 aa). The disordered stretch occupies residues 66-96; that stretch reads KSVFTASSPKQQDKLQQEIDQHQSDNSHEQQ. Residues 76-96 show a composition bias toward basic and acidic residues; the sequence is QQDKLQQEIDQHQSDNSHEQQ. N-linked (GlcNAc...) asparagine glycosylation is found at N445, N648, and N699.

Belongs to the BMT family.

It localises to the membrane. Its function is as follows. Beta-mannosyltransferase involved in cell wall biosynthesis through beta-1,2-mannosylation of cell wall phosphopeptidomannan. The chain is Beta-mannosyltransferase 9 (BMT9) from Candida albicans (strain SC5314 / ATCC MYA-2876) (Yeast).